The sequence spans 426 residues: Probable indole-3-pyruvate monooxygenase YUCCA8 (426 aa).

Residue 29 to 34 participates in FAD binding; that stretch reads GAGPSG. 199-204 is an NADP(+) binding site; sequence GCGNSG.

The protein belongs to the FMO family. Requires FAD as cofactor. As to expression, expressed in root tips and in hydathodes. Expressed in root vasculature and quiescent center, but not in the meristematic zone of the root tip.

It carries out the reaction indole-3-pyruvate + NADPH + O2 + H(+) = (indol-3-yl)acetate + CO2 + NADP(+) + H2O. The protein operates within plant hormone metabolism; auxin biosynthesis. Its function is as follows. Involved in auxin biosynthesis. Belongs to the set of redundant YUCCA genes probably responsible for auxin biosynthesis in roots. The protein is Probable indole-3-pyruvate monooxygenase YUCCA8 (YUC8) of Arabidopsis thaliana (Mouse-ear cress).